A 317-amino-acid polypeptide reads, in one-letter code: Melanocyte-stimulating hormone receptor (317 aa).

Over 1-37 the chain is Extracellular; that stretch reads MPVQGSQRRLLGSLNSTPTATPHLGLAANQTGARCLE. Residue Asn29 is glycosylated (N-linked (GlcNAc...) asparagine). A helical transmembrane segment spans residues 38–63; sequence VSIPDGLFLSLGLVSLVENVLVVTAI. Over 64 to 72 the chain is Cytoplasmic; the sequence is AKNRNLHSP. Residues 73-93 form a helical membrane-spanning segment; it reads MYCFICCLALSDLLVSGSNML. Residues 94 to 118 lie on the Extracellular side of the membrane; it reads ETAVILLLEAGALAARAAVVQQLDN. The chain crosses the membrane as a helical span at residues 119 to 140; that stretch reads VIDVITCSSMLASLCFLGAIAV. The Cytoplasmic portion of the chain corresponds to 141 to 163; the sequence is DRYISIFYALRYHSIVTLPRARR. Residues 164 to 183 form a helical membrane-spanning segment; that stretch reads AVAAIWVASVLFSMLFIAYY. The Extracellular segment spans residues 184–191; sequence DHAAVLLC. A helical membrane pass occupies residues 192-211; that stretch reads LVVFFLAMLVLMAVLYIHML. Topologically, residues 212–240 are cytoplasmic; it reads ARARQHAQGIARLHKRQCPAHQGFGLKGA. The helical transmembrane segment at 241–266 threads the bilayer; sequence ATLTILLGIFFLCWGPFFLHLTLIVL. At 267–279 the chain is on the extracellular side; it reads CPQHPTCSCIFKN. Residues 280 to 300 form a helical membrane-spanning segment; the sequence is FNLFLALIICNAIIDPLIYAF. At 301 to 317 the chain is on the cytoplasmic side; that stretch reads RSQELRRTLKEVLLCSW. The S-palmitoyl cysteine moiety is linked to residue Cys315.

The protein belongs to the G-protein coupled receptor 1 family. In terms of assembly, interacts with MGRN1, but does not undergo MGRN1-mediated ubiquitination; this interaction competes with GNAS-binding and thus inhibits agonist-induced cAMP production. Interacts with OPN3; the interaction results in a decrease in MC1R-mediated cAMP signaling and ultimately a decrease in melanin production in melanocytes.

It is found in the cell membrane. Functionally, receptor for MSH (alpha, beta and gamma) and ACTH. The activity of this receptor is mediated by G proteins which activate adenylate cyclase. Mediates melanogenesis, the production of eumelanin (black/brown) and phaeomelanin (red/yellow), via regulation of cAMP signaling in melanocytes. The protein is Melanocyte-stimulating hormone receptor (MC1R) of Cercopithecus mitis (Blue monkey).